Consider the following 1168-residue polypeptide: DNA-directed RNA polymerase subunit beta (1168 aa).

This sequence belongs to the RNA polymerase beta chain family. The RNAP catalytic core consists of 2 alpha, 1 beta, 1 beta' and 1 omega subunit. When a sigma factor is associated with the core the holoenzyme is formed, which can initiate transcription.

It carries out the reaction RNA(n) + a ribonucleoside 5'-triphosphate = RNA(n+1) + diphosphate. Its function is as follows. DNA-dependent RNA polymerase catalyzes the transcription of DNA into RNA using the four ribonucleoside triphosphates as substrates. The polypeptide is DNA-directed RNA polymerase subunit beta (Corynebacterium kroppenstedtii (strain DSM 44385 / JCM 11950 / CIP 105744 / CCUG 35717)).